An 89-amino-acid polypeptide reads, in one-letter code: Exodeoxyribonuclease 7 small subunit (89 aa).

Residues 1–22 (MRKKSSSNKEETALHPPPENFE) are disordered.

It belongs to the XseB family. In terms of assembly, heterooligomer composed of large and small subunits.

Its subcellular location is the cytoplasm. It catalyses the reaction Exonucleolytic cleavage in either 5'- to 3'- or 3'- to 5'-direction to yield nucleoside 5'-phosphates.. In terms of biological role, bidirectionally degrades single-stranded DNA into large acid-insoluble oligonucleotides, which are then degraded further into small acid-soluble oligonucleotides. The polypeptide is Exodeoxyribonuclease 7 small subunit (Nitrosomonas europaea (strain ATCC 19718 / CIP 103999 / KCTC 2705 / NBRC 14298)).